Here is a 159-residue protein sequence, read N- to C-terminus: Na(+)/H(+) antiporter subunit E1 (159 aa).

Helical transmembrane passes span 1 to 21 (MAIQIILNFILAFIWIFLSGS), 27 to 47 (LLLGFILGLGFVYLFSRILPG), 49 to 69 (FYFIKIYKILKLAVVFFVELL), and 101 to 121 (WQIVLLSNLITLTPGTVVLGI).

Belongs to the CPA3 antiporters (TC 2.A.63) subunit E family. May form a heterooligomeric complex that consists of seven subunits: mnhA1, mnhB1, mnhC1, mnhD1, mnhE1, mnhF1 and mnhG1.

Its subcellular location is the cell membrane. Mnh complex is a Na(+)/H(+) antiporter involved in Na(+) excretion. The protein is Na(+)/H(+) antiporter subunit E1 (mnhE1) of Staphylococcus haemolyticus (strain JCSC1435).